The sequence spans 131 residues: Protein ApaG (131 aa).

The ApaG domain occupies 3–127 (RAVTRQIEVT…FSLDSPDGGK (125 aa)).

The polypeptide is Protein ApaG (Bradyrhizobium sp. (strain BTAi1 / ATCC BAA-1182)).